Reading from the N-terminus, the 254-residue chain is Galactitol 2-dehydrogenase (L-tagatose-forming) (254 aa).

NAD(+) contacts are provided by residues 21–23 (SGI), Asp42, 66–67 (DV), Tyr159, Lys163, and 192–194 (VAT). Tyr159 functions as the Proton acceptor in the catalytic mechanism. A Mg(2+)-binding site is contributed by Trp254.

The protein belongs to the short-chain dehydrogenases/reductases (SDR) family. In terms of assembly, homotetramer. A divalent metal cation serves as cofactor.

The enzyme catalyses galactitol + NAD(+) = keto-L-tagatose + NADH + H(+). Its activity is regulated as follows. Inhibited by the chelating agents EDTA and alpha,alpha'-dipyridyl. Inhibited by Zn(2+) and Fe(2+). Its function is as follows. Catalyzes the interconversion of galactitol to the rare sugar L-tagatose. Shows activity with a wide range of substrates, and catalyzes the oxidation of a variety of polyvalent aliphatic alcohols and polyols to the corresponding ketones and ketoses, respectively, and in the reverse reaction, it reduces ketones with high stereoselectivity yielding the corresponding S-configurated alcohols. Shows high activity with D-threitol, xylitol, 1,2-hexanediol, 1,2-pentanediol, 2-hexanol, L-erythrulose, D-ribulose and acetoin. Specific for NAD(+). The polypeptide is Galactitol 2-dehydrogenase (L-tagatose-forming) (Cereibacter sphaeroides (Rhodobacter sphaeroides)).